The sequence spans 449 residues: GTPase Der (449 aa).

EngA-type G domains are found at residues 2 to 169 (FTVA…QLPP) and 180 to 355 (VRFC…EQLT). GTP-binding positions include 8-15 (GRPNVGKS), 55-59 (DTGGL), 118-121 (NKSE), 186-193 (GKPNVGKS), 233-237 (DTAGI), and 298-301 (NKWD). The KH-like domain maps to 356 to 440 (KKISTSLLND…PITLYFKSKN (85 aa)).

It belongs to the TRAFAC class TrmE-Era-EngA-EngB-Septin-like GTPase superfamily. EngA (Der) GTPase family. In terms of assembly, associates with the 50S ribosomal subunit.

Functionally, GTPase that plays an essential role in the late steps of ribosome biogenesis. The protein is GTPase Der of Mycoplasma pneumoniae (strain ATCC 29342 / M129 / Subtype 1) (Mycoplasmoides pneumoniae).